A 171-amino-acid polypeptide reads, in one-letter code: Shikimate kinase (171 aa).

14–19 provides a ligand contact to ATP; it reads GAGKST. Ser-18 contributes to the Mg(2+) binding site. Substrate-binding residues include Asp-36, Arg-60, and Gly-82. Arg-120 contacts ATP. Arg-139 is a binding site for substrate. Gln-156 is an ATP binding site.

It belongs to the shikimate kinase family. As to quaternary structure, monomer. Requires Mg(2+) as cofactor.

The protein localises to the cytoplasm. The catalysed reaction is shikimate + ATP = 3-phosphoshikimate + ADP + H(+). It functions in the pathway metabolic intermediate biosynthesis; chorismate biosynthesis; chorismate from D-erythrose 4-phosphate and phosphoenolpyruvate: step 5/7. In terms of biological role, catalyzes the specific phosphorylation of the 3-hydroxyl group of shikimic acid using ATP as a cosubstrate. This Shewanella amazonensis (strain ATCC BAA-1098 / SB2B) protein is Shikimate kinase.